The following is a 351-amino-acid chain: Glycerol-3-phosphate dehydrogenase 1-like protein (351 aa).

Residue 12-17 participates in NAD(+) binding; the sequence is GSGNWG. Lysine 122 is a substrate binding site. Alanine 155 lines the NAD(+) pocket. Residue lysine 206 is the Proton acceptor of the active site. Positions 271, 298, and 300 each coordinate NAD(+). 271–272 lines the substrate pocket; that stretch reads RN.

Belongs to the NAD-dependent glycerol-3-phosphate dehydrogenase family. Interacts with SCN5A.

It is found in the cytoplasm. It catalyses the reaction sn-glycerol 3-phosphate + NAD(+) = dihydroxyacetone phosphate + NADH + H(+). Functionally, plays a role in regulating cardiac sodium current; decreased enzymatic activity with resulting increased levels of glycerol 3-phosphate activating the DPD1L-dependent SCN5A phosphorylation pathway, may ultimately lead to decreased sodium current; cardiac sodium current may also be reduced due to alterations of NAD(H) balance induced by DPD1L. The protein is Glycerol-3-phosphate dehydrogenase 1-like protein (GPD1L) of Pongo abelii (Sumatran orangutan).